Consider the following 93-residue polypeptide: Cobalt transport protein CbiN (93 aa).

Helical transmembrane passes span 5–25 (LILL…NHGG) and 63–83 (LLFT…LGYA).

Belongs to the CbiN family. As to quaternary structure, forms an energy-coupling factor (ECF) transporter complex composed of an ATP-binding protein (A component, CbiO), a transmembrane protein (T component, CbiQ) and 2 possible substrate-capture proteins (S components, CbiM and CbiN) of unknown stoichimetry.

The protein resides in the cell inner membrane. The protein operates within cofactor biosynthesis; adenosylcobalamin biosynthesis. Functionally, part of the energy-coupling factor (ECF) transporter complex CbiMNOQ involved in cobalt import. This is Cobalt transport protein CbiN from Klebsiella pneumoniae subsp. pneumoniae (strain ATCC 700721 / MGH 78578).